Reading from the N-terminus, the 518-residue chain is Endoglucanase 18 (518 aa).

Over 1–35 (MANCVRCCCWLLVLMLMALAITAAVVFVRYKNGEG) the chain is Cytoplasmic. The helical transmembrane segment at 36–56 (VFPFPGVPGAVDHKYADALAV) threads the bilayer. Over 57 to 518 (ALQFFQVQKS…STSSLARSLS (462 aa)) the chain is Extracellular. N-linked (GlcNAc...) asparagine glycosylation occurs at N71. The active-site Nucleophile is the D101. Residues N214, N251, and N272 are each glycosylated (N-linked (GlcNAc...) asparagine). H436 is an active-site residue. Residue N477 is glycosylated (N-linked (GlcNAc...) asparagine). Catalysis depends on residues D482 and E491.

It belongs to the glycosyl hydrolase 9 (cellulase E) family.

The protein resides in the membrane. It carries out the reaction Endohydrolysis of (1-&gt;4)-beta-D-glucosidic linkages in cellulose, lichenin and cereal beta-D-glucans.. The polypeptide is Endoglucanase 18 (Oryza sativa subsp. japonica (Rice)).